The primary structure comprises 264 residues: Thymidylate synthase (264 aa).

Arginine 21 is a binding site for dUMP. Histidine 51 provides a ligand contact to (6R)-5,10-methylene-5,6,7,8-tetrahydrofolate. A dUMP-binding site is contributed by 126 to 127 (RR). Cysteine 146 (nucleophile) is an active-site residue. DUMP-binding positions include 166–169 (RSCD), asparagine 177, and 207–209 (HLY). Residue aspartate 169 coordinates (6R)-5,10-methylene-5,6,7,8-tetrahydrofolate. Alanine 263 lines the (6R)-5,10-methylene-5,6,7,8-tetrahydrofolate pocket.

This sequence belongs to the thymidylate synthase family. Bacterial-type ThyA subfamily. As to quaternary structure, homodimer.

It localises to the cytoplasm. The catalysed reaction is dUMP + (6R)-5,10-methylene-5,6,7,8-tetrahydrofolate = 7,8-dihydrofolate + dTMP. It functions in the pathway pyrimidine metabolism; dTTP biosynthesis. Catalyzes the reductive methylation of 2'-deoxyuridine-5'-monophosphate (dUMP) to 2'-deoxythymidine-5'-monophosphate (dTMP) while utilizing 5,10-methylenetetrahydrofolate (mTHF) as the methyl donor and reductant in the reaction, yielding dihydrofolate (DHF) as a by-product. This enzymatic reaction provides an intracellular de novo source of dTMP, an essential precursor for DNA biosynthesis. The protein is Thymidylate synthase of Klebsiella pneumoniae subsp. pneumoniae (strain ATCC 700721 / MGH 78578).